A 298-amino-acid chain; its full sequence is Glutamyl-Q tRNA(Asp) synthetase (298 aa).

L-glutamate-binding positions include 8–12 (RFAPS) and E44. The 'HIGH' region signature appears at 11 to 21 (PSPTGPLHFGS). Positions 100, 102, 123, and 127 each coordinate Zn(2+). The L-glutamate site is built by Y183 and R201. The 'KMSKS' region motif lies at 239–243 (KLSKQ). K242 contacts ATP.

The protein belongs to the class-I aminoacyl-tRNA synthetase family. GluQ subfamily. Zn(2+) serves as cofactor.

Functionally, catalyzes the tRNA-independent activation of glutamate in presence of ATP and the subsequent transfer of glutamate onto a tRNA(Asp). Glutamate is transferred on the 2-amino-5-(4,5-dihydroxy-2-cyclopenten-1-yl) moiety of the queuosine in the wobble position of the QUC anticodon. This chain is Glutamyl-Q tRNA(Asp) synthetase, found in Burkholderia orbicola (strain MC0-3).